Reading from the N-terminus, the 839-residue chain is Small conductance calcium-activated potassium channel protein 2 (839 aa).

4 disordered regions span residues 1 to 33 (MPIV…QESP), 64 to 115 (QRGF…QQPG), 195 to 258 (ALRQ…RRES), and 280 to 375 (SNLS…KKNQ). 2 stretches are compositionally biased toward low complexity: residues 198 to 212 (QQYA…QYHQ) and 219 to 235 (ATSP…GPPL). The segment covering 236–253 (SHHHHHPHPAHHQHHQPQ) has biased composition (basic residues). A compositionally biased stretch (low complexity) spans 313-326 (SSPSAAAAASSSAP). Residues 345-363 (GTGGGGSTGGGGGGSGHGS) show a composition bias toward gly residues. The chain crosses the membrane as a helical span at residues 398-418 (ALIFGMFGIVVMVIETELSWG). At Y420 the chain carries Phosphotyrosine. Residues 428–448 (LALKCLISLSTIILLGLIIVY) traverse the membrane as a helical segment. The chain crosses the membrane as a helical span at residues 474 to 494 (IFFICLEILVCAIHPIPGNYT). Residues 516 to 536 (IILSIPMFLRLYLIARVMLLH) form a helical membrane-spanning segment. The chain crosses the membrane as a helical span at residues 565–585 (LMTICPGTVLLVFSISLWIIA). The segment at residues 605–625 (FLGAMWLISITFLSIGYGDMV) is an intramembrane region (pore-forming). The helical transmembrane segment at 634–654 (VCLLTGIMGAGCTALVVAVVA) threads the bilayer. The calmodulin-binding stretch occupies residues 672 to 748 (DTQLTKRVKN…LVDLAKTQNI (77 aa)). A compositionally biased stretch (basic and acidic residues) spans 810-819 (HVSYNAERSR). The tract at residues 810 to 839 (HVSYNAERSRSSSRRRRSSSTAPPTSSESS) is disordered. A compositionally biased stretch (low complexity) spans 828–839 (SSTAPPTSSESS).

It belongs to the potassium channel KCNN family. KCa2.2/KCNN2 subfamily. In terms of assembly, homodimer. Heteromultimer with KCNN1 and KCNN3. The complex is composed of 4 channel subunits each of which binds to a calmodulin subunit which regulates the channel activity through calcium-binding. Interacts (via N-terminal domain) with MPP2. Expressed in atrial and ventricular myocytes with higher levels in atrial myocytes (at protein level). Highly expressed in brain, liver and colon with low levels in kidney and testis. In colon, detected in smooth muscle cells.

The protein resides in the membrane. It is found in the cytoplasm. Its subcellular location is the myofibril. The protein localises to the sarcomere. It localises to the z line. It carries out the reaction K(+)(in) = K(+)(out). Its activity is regulated as follows. Inhibited by bee venom neurotoxin apamin. Inhibited by UCL 1684 and tetraethylammonium (TEA). In terms of biological role, small conductance calcium-activated potassium channel that mediates the voltage-independent transmembrane transfer of potassium across the cell membrane through a constitutive interaction with calmodulin which binds the intracellular calcium allowing its opening. The current is characterized by a voltage-independent activation, an intracellular calcium concentration increase-dependent activation and a single-channel conductance of about 3 picosiemens. Also presents an inwardly rectifying current, thus reducing its already small outward conductance of potassium ions, which is particularly the case when the membrane potential displays positive values, above + 20 mV. The inward rectification could be due to a blockade of the outward current by intracellular divalent cations such as calcium and magnesium and could also be due to an intrinsic property of the channel pore, independent of intracellular divalent ions. There are three positively charged amino acids in the S6 transmembrane domain, close to the pore, that collectively control the conductance and rectification through an electrostatic mechanism. Additionally, electrostatic contributions from these residues also play an important role in determining the intrinsic open probability of the channel in the absence of calcium, affecting the apparent calcium affinity for activation. Forms an heteromeric complex with calmodulin, which is constitutively associated in a calcium-independent manner. Channel opening is triggered when calcium binds the calmodulin resulting in a rotary movement leading to the formation of the dimeric complex to open the gate. Plays a role in the repolarization phase of cardiac action potential. The chain is Small conductance calcium-activated potassium channel protein 2 from Mus musculus (Mouse).